The chain runs to 327 residues: Probable cell division protein WhiA (327 aa).

The segment at residues 275–308 (SLEELGRLADPQMTKDAVAGRIRRLLTMADKRAE) is a DNA-binding region (H-T-H motif).

The protein belongs to the WhiA family.

Functionally, involved in cell division and chromosome segregation. The sequence is that of Probable cell division protein WhiA from Corynebacterium glutamicum (strain ATCC 13032 / DSM 20300 / JCM 1318 / BCRC 11384 / CCUG 27702 / LMG 3730 / NBRC 12168 / NCIMB 10025 / NRRL B-2784 / 534).